The following is a 201-amino-acid chain: Proteasome subunit beta 1 (201 aa).

A propeptide (removed in mature form; by autocatalysis) is located at residue Met1. The Nucleophile role is filled by Thr2.

This sequence belongs to the peptidase T1B family. In terms of assembly, the 20S proteasome core is composed of 14 alpha and 14 beta subunits that assemble into four stacked heptameric rings, resulting in a barrel-shaped structure. The two inner rings, each composed of seven catalytic beta subunits, are sandwiched by two outer rings, each composed of seven alpha subunits. The catalytic chamber with the active sites is on the inside of the barrel. Has a gated structure, the ends of the cylinder being occluded by the N-termini of the alpha-subunits. Is capped at one or both ends by the proteasome regulatory ATPase, PAN.

Its subcellular location is the cytoplasm. It catalyses the reaction Cleavage of peptide bonds with very broad specificity.. With respect to regulation, the formation of the proteasomal ATPase PAN-20S proteasome complex, via the docking of the C-termini of PAN into the intersubunit pockets in the alpha-rings, triggers opening of the gate for substrate entry. Interconversion between the open-gate and close-gate conformations leads to a dynamic regulation of the 20S proteasome proteolysis activity. Component of the proteasome core, a large protease complex with broad specificity involved in protein degradation. This is Proteasome subunit beta 1 from Pyrobaculum calidifontis (strain DSM 21063 / JCM 11548 / VA1).